The following is a 933-amino-acid chain: Serine/threonine-protein kinase PknD (933 aa).

Residues 4 to 291 (YDIIRMIGKG…ALKADIEQHL (288 aa)) form the Protein kinase domain. Residues 10–18 (IGKGGMGEV) and Lys33 each bind ATP. Asp138 (proton acceptor) is an active-site residue.

This sequence belongs to the protein kinase superfamily. Ser/Thr protein kinase family. Autophosphorylated on serine and threonine residues.

It carries out the reaction L-seryl-[protein] + ATP = O-phospho-L-seryl-[protein] + ADP + H(+). It catalyses the reaction L-threonyl-[protein] + ATP = O-phospho-L-threonyl-[protein] + ADP + H(+). Functionally, together with the serine/threonine kinase Pkn1, may play a role in the specific interactions with host proteins during intracellular growth. This is Serine/threonine-protein kinase PknD from Chlamydia abortus (strain DSM 27085 / S26/3) (Chlamydophila abortus).